The chain runs to 338 residues: Ketoreductase azaE (338 aa).

Residues Lys41 and Tyr166 each contribute to the NADP(+) site.

The protein belongs to the NAD(P)-dependent epimerase/dehydratase family. Dihydroflavonol-4-reductase subfamily.

It functions in the pathway secondary metabolite biosynthesis. In terms of biological role, ketoreductase; part of the gene cluster that mediates the biosynthesis of azaphilones, a class of fungal metabolites characterized by a highly oxygenated pyrano-quinone bicyclic core and exhibiting a broad range of bioactivities. In the first step, the non-reducing polyketide synthase azaA forms the hexaketide precursor from successive condensations of five malonyl-CoA units, presumably with a simple acetyl-CoA starter unit. The reactive polyketide chain then undergoes a PT-mediated C2-C7 cyclization to afford the aromatic ring and is eventually released as an aldehyde through the R-domain. The putative ketoreductase azaE is proposed to catalyze the reduction of the terminal ketone resulting in the early culture product FK17-P2a. The monooxygenase azaH was demonstrated to be the only enzyme required to convert FK17-P2a to azanigerone E. AzaH first hydroxylates the benzaldehyde intermediate FK17-P2a at C4, which triggers the formation of the pyran-ring to afford azanigerone E. In parallel, the 2,4-dimethylhexanoyl chain is synthesized by the HR-PKS azaB and is proposed to be transferred to the C4-hydroxyl of azanigerone E by the acyltransferase azaD directly from the ACP domain of azaB. Alternatively, the 2,4-dimethyl-hexanoyl chain may be offloaded from the HR-PKS as a carboxylic acid and converted to an acyl-CoA by azaF. The resulting acyl-CoA molecule could then be taken up as a substrate by AzaD to form azanigerone B. To yield the carboxylic acid substituent in azanigerone A, the hydroxypropyl side chain of azanigerone B would need to undergo a C-C oxidative cleavage catalyzed by cytochrome P450 AzaI. AzaI is proposed to act on a vicinal diol that leads to a C-C bond scission either through an alkoxyradical intermediate or a peroxy complex. In the biosynthesis of azanigerone A, azanigerone B first undergoes hydroxylation at C10, possibly catalyzed by one of the two FAD-dependent monooxygenases encoded in the cluster, azaG or azaL, resulting in the vicinal diol azanigerone C. Oxidative cleavage of azanigerone C by azaI would yield the corresponding aldehyde derivative of azanigerone A. Finally, the dehydrogenase azaJ is proposed to convert the aldehyde functional group into the carboxylic acid, completing the conversion from azanigerone B to azanigerone A. Alternatively, the oxidation of aldehyde to carboxylic acid may be catalyzed by the same P450 enzyme azaI via consecutive oxidation or by endogenous alcohol dehydrogenase. The chain is Ketoreductase azaE from Aspergillus niger (strain ATCC 1015 / CBS 113.46 / FGSC A1144 / LSHB Ac4 / NCTC 3858a / NRRL 328 / USDA 3528.7).